Reading from the N-terminus, the 238-residue chain is Demethylmenaquinone methyltransferase (238 aa).

Residues threonine 65, aspartate 85, and 109-110 (DA) each bind S-adenosyl-L-methionine.

It belongs to the class I-like SAM-binding methyltransferase superfamily. MenG/UbiE family.

The catalysed reaction is a 2-demethylmenaquinol + S-adenosyl-L-methionine = a menaquinol + S-adenosyl-L-homocysteine + H(+). Its pathway is quinol/quinone metabolism; menaquinone biosynthesis; menaquinol from 1,4-dihydroxy-2-naphthoate: step 2/2. Functionally, methyltransferase required for the conversion of demethylmenaquinol (DMKH2) to menaquinol (MKH2). This is Demethylmenaquinone methyltransferase from Roseiflexus sp. (strain RS-1).